An 887-amino-acid chain; its full sequence is Endoglucanase 1 (887 aa).

The N-terminal stretch at 1 to 55 (MRLVNSLGRRKILLILAVIVAFSTVLLFAKLWGRKTSSTLDEVGSKTHGDLTAEN) is a signal peptide. The segment at 40–66 (LDEVGSKTHGDLTAENKNGGYLPEEEI) is disordered. Residues 43–53 (VGSKTHGDLTA) are compositionally biased toward basic and acidic residues. Residues 56–518 (KNGGYLPEEE…AKMYKLYGGS (463 aa)) are catalytic. Aspartate 131 serves as the catalytic Nucleophile. The segment at 441–460 (ENPPKRPHHRTAHGSWADSQ) is disordered. Residues histidine 448, aspartate 486, and glutamate 495 contribute to the active site. Residues 529-684 (VPEDEIFVEA…GVLVFGREPG (156 aa)) form the CBM3 1 domain. Residues 684 to 730 (GSASKSTSKDNGLSKATPTVKTESQPTAKHTQNPASDFKTPANQNSV) form a disordered region. A compositionally biased stretch (polar residues) spans 686 to 729 (ASKSTSKDNGLSKATPTVKTESQPTAKHTQNPASDFKTPANQNS). The 152-residue stretch at 736 to 887 (IKGEVVLQYA…SNKLVYGKEP (152 aa)) folds into the CBM3 2 domain.

Belongs to the glycosyl hydrolase 9 (cellulase E) family.

It catalyses the reaction Endohydrolysis of (1-&gt;4)-beta-D-glucosidic linkages in cellulose, lichenin and cereal beta-D-glucans.. The protein operates within glycan metabolism; cellulose degradation. Its function is as follows. This enzyme catalyzes the endohydrolysis of 1,4-beta-glucosidic linkages in cellulose, lichenin and cereal beta-D-glucans. Principally active against barley beta-glucan. This is Endoglucanase 1 (celI) from Acetivibrio thermocellus (strain ATCC 27405 / DSM 1237 / JCM 9322 / NBRC 103400 / NCIMB 10682 / NRRL B-4536 / VPI 7372) (Clostridium thermocellum).